The following is a 250-amino-acid chain: Octanoyltransferase (250 aa).

Positions 44-224 (GAGSDRLLLL…AVVQALNGDL (181 aa)) constitute a BPL/LPL catalytic domain. Substrate contacts are provided by residues 82–89 (RGGKITWH), 154–156 (AIG), and 167–169 (GIS). The Acyl-thioester intermediate role is filled by Cys185. Residues 224-250 (LPVRDHDLPRPGTTPAAPNSTRVRSMT) are disordered. Residues 239 to 250 (AAPNSTRVRSMT) are compositionally biased toward polar residues.

Belongs to the LipB family.

Its subcellular location is the cytoplasm. It carries out the reaction octanoyl-[ACP] + L-lysyl-[protein] = N(6)-octanoyl-L-lysyl-[protein] + holo-[ACP] + H(+). The protein operates within protein modification; protein lipoylation via endogenous pathway; protein N(6)-(lipoyl)lysine from octanoyl-[acyl-carrier-protein]: step 1/2. Its function is as follows. Catalyzes the transfer of endogenously produced octanoic acid from octanoyl-acyl-carrier-protein onto the lipoyl domains of lipoate-dependent enzymes. Lipoyl-ACP can also act as a substrate although octanoyl-ACP is likely to be the physiological substrate. The sequence is that of Octanoyltransferase from Nocardia farcinica (strain IFM 10152).